The sequence spans 471 residues: Heat shock 70 kDa protein 13 (471 aa).

Positions 1-22 (MAREMTILGSAVLTLLLAGYLA) are cleaved as a signal peptide. Residues 315–341 (EQDRKEPHSSDTELPKDKLSSADDHRV) show a composition bias toward basic and acidic residues. Positions 315-352 (EQDRKEPHSSDTELPKDKLSSADDHRVNSGFGRGLSDK) are disordered.

It belongs to the heat shock protein 70 family. As to quaternary structure, binds UBQLN2. Constitutively expressed in all tissues.

It is found in the microsome. The protein resides in the endoplasmic reticulum. Functionally, has peptide-independent ATPase activity. In Homo sapiens (Human), this protein is Heat shock 70 kDa protein 13 (HSPA13).